Here is a 325-residue protein sequence, read N- to C-terminus: Tagatose 1,6-diphosphate aldolase 1 (325 aa).

It belongs to the aldolase LacD family.

The catalysed reaction is D-tagatofuranose 1,6-bisphosphate = D-glyceraldehyde 3-phosphate + dihydroxyacetone phosphate. The protein operates within carbohydrate metabolism; D-tagatose 6-phosphate degradation; D-glyceraldehyde 3-phosphate and glycerone phosphate from D-tagatose 6-phosphate: step 2/2. The protein is Tagatose 1,6-diphosphate aldolase 1 (lacD1) of Streptococcus pyogenes serotype M3 (strain ATCC BAA-595 / MGAS315).